We begin with the raw amino-acid sequence, 618 residues long: Proline--tRNA ligase (618 aa).

This sequence belongs to the class-II aminoacyl-tRNA synthetase family. ProS type 1 subfamily. In terms of assembly, homodimer.

It localises to the cytoplasm. The enzyme catalyses tRNA(Pro) + L-proline + ATP = L-prolyl-tRNA(Pro) + AMP + diphosphate. Its function is as follows. Catalyzes the attachment of proline to tRNA(Pro) in a two-step reaction: proline is first activated by ATP to form Pro-AMP and then transferred to the acceptor end of tRNA(Pro). As ProRS can inadvertently accommodate and process non-cognate amino acids such as alanine and cysteine, to avoid such errors it has two additional distinct editing activities against alanine. One activity is designated as 'pretransfer' editing and involves the tRNA(Pro)-independent hydrolysis of activated Ala-AMP. The other activity is designated 'posttransfer' editing and involves deacylation of mischarged Ala-tRNA(Pro). The misacylated Cys-tRNA(Pro) is not edited by ProRS. The chain is Proline--tRNA ligase from Streptococcus equi subsp. equi (strain 4047).